We begin with the raw amino-acid sequence, 185 residues long: CDP-diacylglycerol--glycerol-3-phosphate 3-phosphatidyltransferase (185 aa).

A run of 4 helical transmembrane segments spans residues 7–26 (IFLTIFRVILIPFFVIAFYL), 33–52 (FITTLIFFIAGVTDWLDGYL), 89–108 (FWITIPAIIMISREIIISAL), and 151–172 (IAAIILLYIAAILTIWSMIQYL).

The protein belongs to the CDP-alcohol phosphatidyltransferase class-I family.

Its subcellular location is the cell membrane. The catalysed reaction is a CDP-1,2-diacyl-sn-glycerol + sn-glycerol 3-phosphate = a 1,2-diacyl-sn-glycero-3-phospho-(1'-sn-glycero-3'-phosphate) + CMP + H(+). It participates in phospholipid metabolism; phosphatidylglycerol biosynthesis; phosphatidylglycerol from CDP-diacylglycerol: step 1/2. This protein catalyzes the committed step to the synthesis of the acidic phospholipids. The protein is CDP-diacylglycerol--glycerol-3-phosphate 3-phosphatidyltransferase (pgsA) of Haemophilus influenzae (strain ATCC 51907 / DSM 11121 / KW20 / Rd).